The primary structure comprises 462 residues: MSAEPHHLYSQLPAIDSLLRAPEMAPLLDEYGAALLTENLRLMQAEAREYIRQFHTLADWCADWPAALRHRLNQRQPALKPVFNLSGTVLHTNLGRAPLAESAIAAVTDAMRGAVTLEYSLSGAGRGHRDRAVADLLCELTGAEDACIVNNNAAAVFLMLTVMAAGKQVVVSRGELVEIGGAFRIPDVMRQAGCELVEVGTTNRTHLKDYRQAISEHTGLLMKVHTSNYSIEGFTASVAEQQLAALGHEFAIPTATDLGSGSLVDMTRYGLPAEPMPQQLIAAGVDLVTFSGDKLLGGPQAGIILGKKQWIDQLQQHPLKRVLRADKMTLAALDATLRLYQQPDRLTELLPTMRLLTRPAQDIAESAQRVLAALNGSYAADFTLAVESCWSQIGSGSLPVDRLPSWAVTFTPKDGSGSALEALTVRWRGLAKPIIGRVADGRLWLDLRCLEDEAALLRELAP.

Lysine 294 carries the N6-(pyridoxal phosphate)lysine modification.

The protein belongs to the SelA family. As to quaternary structure, homodecamer; pentamer of dimers. Binds only one seryl-tRNA(Sec) per dimer. The cofactor is pyridoxal 5'-phosphate.

Its subcellular location is the cytoplasm. It carries out the reaction L-seryl-tRNA(Sec) + selenophosphate + H(+) = L-selenocysteinyl-tRNA(Sec) + phosphate. Its pathway is aminoacyl-tRNA biosynthesis; selenocysteinyl-tRNA(Sec) biosynthesis; selenocysteinyl-tRNA(Sec) from L-seryl-tRNA(Sec) (bacterial route): step 1/1. Converts seryl-tRNA(Sec) to selenocysteinyl-tRNA(Sec) required for selenoprotein biosynthesis. This is L-seryl-tRNA(Sec) selenium transferase from Yersinia enterocolitica serotype O:8 / biotype 1B (strain NCTC 13174 / 8081).